Reading from the N-terminus, the 188-residue chain is Inosine triphosphate pyrophosphatase (188 aa).

7-12 (TGNAGK) is a binding site for ITP. Residue glutamate 36 coordinates Mg(2+). ITP is bound by residues lysine 48, 64–65 (DT), lysine 81, 140–143 (FGWN), lysine 163, and 168–169 (HR).

This sequence belongs to the HAM1 NTPase family. In terms of assembly, homodimer. It depends on Mg(2+) as a cofactor. Mn(2+) is required as a cofactor.

The protein resides in the cytoplasm. It is found in the nucleus. It carries out the reaction ITP + H2O = IMP + diphosphate + H(+). It catalyses the reaction dITP + H2O = dIMP + diphosphate + H(+). The enzyme catalyses XTP + H2O = XMP + diphosphate + H(+). In terms of biological role, pyrophosphatase that hydrolyzes non-canonical purine nucleotides such as inosine triphosphate (ITP), deoxyinosine triphosphate (dITP) or xanthosine 5'-triphosphate (XTP) to their respective monophosphate derivatives. The enzyme does not distinguish between the deoxy- and ribose forms. Probably excludes non-canonical purines from RNA and DNA precursor pools, thus preventing their incorporation into RNA and DNA and avoiding chromosomal lesions. This chain is Inosine triphosphate pyrophosphatase, found in Yarrowia lipolytica (strain CLIB 122 / E 150) (Yeast).